A 433-amino-acid chain; its full sequence is Trigger factor (433 aa).

The 86-residue stretch at 166-251 (GDFAVIDFEG…LHEIQERAKP (86 aa)) folds into the PPIase FKBP-type domain.

The protein belongs to the FKBP-type PPIase family. Tig subfamily.

The protein localises to the cytoplasm. It carries out the reaction [protein]-peptidylproline (omega=180) = [protein]-peptidylproline (omega=0). Involved in protein export. Acts as a chaperone by maintaining the newly synthesized protein in an open conformation. Functions as a peptidyl-prolyl cis-trans isomerase. This is Trigger factor from Aliarcobacter butzleri (strain RM4018) (Arcobacter butzleri).